The chain runs to 391 residues: MFLNSLDLPGPPENSRVVVAMSGGVDSSVVAGLLKREGYDVVGITLQLYDHGAATHRAGACCAGQDIEDARRVAETLRIPYYVLDYESRFREAVIDPFAESYARGETPIPCVACNQTVKFADLLVTARELGADALATGHYIRSVSYGTHRALFRPLDSERDQSYFLFATTQEQIDYLRFPLGNLPKARVREIAKEMGLTVADKHDSQDICFVPQGKYSDVIAKLRPEASNPGDIVHINGQILGQHSGIINYTVGQRRGIGVATGEALYVIFLDVENARVIVGPREMLETHKLFLRDVNWLGDERLENFPSDCIDVAAKIRSTRPPRPARLYYKEGIFSVDLLEGESSVAPGQACVFYNESGDGARVLGGGFITHSERSTDAEERLQRVLHN.

ATP-binding positions include 20–27 (AMSGGVDS) and leucine 46. Cysteine 114 functions as the Nucleophile in the catalytic mechanism. Cysteine 114 and cysteine 210 form a disulfide bridge. Glycine 138 provides a ligand contact to ATP. Residues 160 to 162 (RDQ) are interaction with tRNA. Residue cysteine 210 is the Cysteine persulfide intermediate of the active site.

It belongs to the MnmA/TRMU family.

It is found in the cytoplasm. It catalyses the reaction S-sulfanyl-L-cysteinyl-[protein] + uridine(34) in tRNA + AH2 + ATP = 2-thiouridine(34) in tRNA + L-cysteinyl-[protein] + A + AMP + diphosphate + H(+). Functionally, catalyzes the 2-thiolation of uridine at the wobble position (U34) of tRNA, leading to the formation of s(2)U34. The sequence is that of tRNA-specific 2-thiouridylase MnmA from Bartonella bacilliformis (strain ATCC 35685 / KC583 / Herrer 020/F12,63).